We begin with the raw amino-acid sequence, 220 residues long: MRVIVITVFLFIGAAIAEDVGIGLLSEAEAYVSPKLKKFITPCTSHVGETCSTTSSSGSEALMQNQGGLLFAFRFYGEMLGRPCAQLYQTSVTNLQVEPSEVFPRKNNPQGGRKSKLDDHQVQPLSFRLPPFRLPPMPKLGPTSPIIRTIPSPPIAPRDLSLIETIQLRTALRTCTHVTARTCLTAPNVATSDLEACLTPSMNQCIYPRGAEYGSPPIRA.

Positions 1–17 (MRVIVITVFLFIGAAIA) are cleaved as a signal peptide. Positions 99-120 (PSEVFPRKNNPQGGRKSKLDDH) are disordered.

It belongs to the nodulin 20 family.

The protein is Nodulin-23 of Glycine max (Soybean).